The sequence spans 673 residues: DNA ligase (673 aa).

Residues 34–38, 83–84, and glutamate 116 contribute to the NAD(+) site; these read DAEYD and SL. The active-site N6-AMP-lysine intermediate is lysine 118. Residues arginine 139, glutamate 176, lysine 293, and lysine 317 each contribute to the NAD(+) site. Zn(2+) contacts are provided by cysteine 411, cysteine 414, cysteine 429, and cysteine 435. A BRCT domain is found at 595–673; that stretch reads NQQNPFFGKT…EDEFLKWVNS (79 aa).

It belongs to the NAD-dependent DNA ligase family. LigA subfamily. Mg(2+) serves as cofactor. It depends on Mn(2+) as a cofactor.

The enzyme catalyses NAD(+) + (deoxyribonucleotide)n-3'-hydroxyl + 5'-phospho-(deoxyribonucleotide)m = (deoxyribonucleotide)n+m + AMP + beta-nicotinamide D-nucleotide.. Its function is as follows. DNA ligase that catalyzes the formation of phosphodiester linkages between 5'-phosphoryl and 3'-hydroxyl groups in double-stranded DNA using NAD as a coenzyme and as the energy source for the reaction. It is essential for DNA replication and repair of damaged DNA. This is DNA ligase from Legionella pneumophila subsp. pneumophila (strain Philadelphia 1 / ATCC 33152 / DSM 7513).